Consider the following 426-residue polypeptide: tRNA(Ile)-lysidine synthase (426 aa).

21–26 is an ATP binding site; it reads SGGLDS.

This sequence belongs to the tRNA(Ile)-lysidine synthase family.

It localises to the cytoplasm. It carries out the reaction cytidine(34) in tRNA(Ile2) + L-lysine + ATP = lysidine(34) in tRNA(Ile2) + AMP + diphosphate + H(+). Functionally, ligates lysine onto the cytidine present at position 34 of the AUA codon-specific tRNA(Ile) that contains the anticodon CAU, in an ATP-dependent manner. Cytidine is converted to lysidine, thus changing the amino acid specificity of the tRNA from methionine to isoleucine. The chain is tRNA(Ile)-lysidine synthase from Enterobacter sp. (strain 638).